Reading from the N-terminus, the 61-residue chain is Small ribosomal subunit protein uS14 (61 aa).

Residues cysteine 24, cysteine 27, cysteine 40, and cysteine 43 each coordinate Zn(2+).

Belongs to the universal ribosomal protein uS14 family. Zinc-binding uS14 subfamily. Part of the 30S ribosomal subunit. Contacts proteins S3 and S10. It depends on Zn(2+) as a cofactor.

Functionally, binds 16S rRNA, required for the assembly of 30S particles and may also be responsible for determining the conformation of the 16S rRNA at the A site. The sequence is that of Small ribosomal subunit protein uS14 from Rhodococcus erythropolis (strain PR4 / NBRC 100887).